Reading from the N-terminus, the 455-residue chain is Beta-glucosidase A (455 aa).

The Proton donor role is filled by Glu165. The active-site Nucleophile is Glu363.

Belongs to the glycosyl hydrolase 1 family.

It carries out the reaction Hydrolysis of terminal, non-reducing beta-D-glucosyl residues with release of beta-D-glucose.. The protein is Beta-glucosidase A (bglA) of Caldicellulosiruptor saccharolyticus (Caldocellum saccharolyticum).